A 62-amino-acid chain; its full sequence is Photosystem II reaction center protein Z (62 aa).

Transmembrane regions (helical) follow at residues 8–28 and 41–61; these read LVLL…VVLA and YTGA…NSLV.

Belongs to the PsbZ family. In terms of assembly, PSII is composed of 1 copy each of membrane proteins PsbA, PsbB, PsbC, PsbD, PsbE, PsbF, PsbH, PsbI, PsbJ, PsbK, PsbL, PsbM, PsbT, PsbX, PsbY, PsbZ, Psb30/Ycf12, at least 3 peripheral proteins of the oxygen-evolving complex and a large number of cofactors. It forms dimeric complexes.

It localises to the plastid. The protein localises to the chloroplast thylakoid membrane. Its function is as follows. May control the interaction of photosystem II (PSII) cores with the light-harvesting antenna, regulates electron flow through the 2 photosystem reaction centers. PSII is a light-driven water plastoquinone oxidoreductase, using light energy to abstract electrons from H(2)O, generating a proton gradient subsequently used for ATP formation. The chain is Photosystem II reaction center protein Z from Porphyra purpurea (Red seaweed).